The chain runs to 400 residues: Acetate kinase (400 aa).

Asn10 contacts Mg(2+). Lys17 contacts ATP. A substrate-binding site is contributed by Arg91. The active-site Proton donor/acceptor is Asp150. ATP contacts are provided by residues 210 to 214 (HLGNG), 285 to 287 (DCR), and 333 to 337 (GIGEN). Residue Glu387 participates in Mg(2+) binding.

It belongs to the acetokinase family. Homodimer. The cofactor is Mg(2+). It depends on Mn(2+) as a cofactor.

Its subcellular location is the cytoplasm. The catalysed reaction is acetate + ATP = acetyl phosphate + ADP. It functions in the pathway metabolic intermediate biosynthesis; acetyl-CoA biosynthesis; acetyl-CoA from acetate: step 1/2. Functionally, catalyzes the formation of acetyl phosphate from acetate and ATP. Can also catalyze the reverse reaction. The protein is Acetate kinase of Proteus mirabilis (strain HI4320).